The primary structure comprises 150 residues: Submaxillary gland androgen-regulated protein 2, isoform alpha (150 aa).

The signal sequence occupies residues methionine 1–cysteine 22.

The protein localises to the secreted. Its function is as follows. May play a role in protection or detoxification. This Mus musculus (Mouse) protein is Submaxillary gland androgen-regulated protein 2, isoform alpha (Smr2).